The sequence spans 152 residues: UPF0266 membrane protein plu2700 (152 aa).

The next 3 helical transmembrane spans lie at 6-26 (IALTGLIVLMLAFAVYDEFVV), 45-65 (IDALIFIILILIVVYNNITVY), and 67-87 (SRLTTYLLLFTILVTIYIAYI).

This sequence belongs to the UPF0266 family.

The protein resides in the cell inner membrane. The polypeptide is UPF0266 membrane protein plu2700 (Photorhabdus laumondii subsp. laumondii (strain DSM 15139 / CIP 105565 / TT01) (Photorhabdus luminescens subsp. laumondii)).